Consider the following 148-residue polypeptide: Transcription antitermination protein NusB (148 aa).

The protein belongs to the NusB family.

In terms of biological role, involved in transcription antitermination. Required for transcription of ribosomal RNA (rRNA) genes. Binds specifically to the boxA antiterminator sequence of the ribosomal RNA (rrn) operons. The chain is Transcription antitermination protein NusB from Saccharopolyspora erythraea (strain ATCC 11635 / DSM 40517 / JCM 4748 / NBRC 13426 / NCIMB 8594 / NRRL 2338).